Reading from the N-terminus, the 565-residue chain is NAD-dependent malic enzyme (565 aa).

The active-site Proton donor is the Tyr-104. Arg-157 contacts NAD(+). Lys-175 acts as the Proton acceptor in catalysis. Glu-246, Asp-247, and Asp-270 together coordinate a divalent metal cation. Asp-270 and Asn-418 together coordinate NAD(+).

The protein belongs to the malic enzymes family. In terms of assembly, homotetramer. Mg(2+) is required as a cofactor. Mn(2+) serves as cofactor.

It catalyses the reaction (S)-malate + NAD(+) = pyruvate + CO2 + NADH. The enzyme catalyses oxaloacetate + H(+) = pyruvate + CO2. This chain is NAD-dependent malic enzyme, found in Salmonella heidelberg (strain SL476).